Consider the following 115-residue polypeptide: U3-lycotoxin-Ls1c (115 aa).

A signal peptide spans 1 to 20; that stretch reads MKFVLLFGVLLVTLFSYSSA. Positions 21–44 are excised as a propeptide; the sequence is EMLDDFDQADEDELLSLIEKEEAR. Disulfide bonds link Cys48–Cys63, Cys55–Cys72, Cys62–Cys87, and Cys74–Cys85.

Belongs to the neurotoxin 19 (CSTX) family. 01 subfamily. As to expression, expressed by the venom gland.

The protein localises to the secreted. This Lycosa singoriensis (Wolf spider) protein is U3-lycotoxin-Ls1c.